The primary structure comprises 174 residues: Elongation factor Tu, mitochondrial (174 aa).

62-66 contributes to the GTP binding site; that stretch reads DCPGH. Residue K78 is modified to N6-succinyllysine. T103 is subject to Phosphothreonine. S121 bears the Phosphoserine mark. K161 carries the N6-acetyllysine modification.

It belongs to the GTP-binding elongation factor family. EF-Tu/EF-1A subfamily.

The protein localises to the mitochondrion. The catalysed reaction is GTP + H2O = GDP + phosphate + H(+). Functionally, GTP hydrolase that promotes the GTP-dependent binding of aminoacyl-tRNA to the A-site of ribosomes during protein biosynthesis. The protein is Elongation factor Tu, mitochondrial of Mesocricetus auratus (Golden hamster).